We begin with the raw amino-acid sequence, 261 residues long: Cytosolic Fe-S cluster assembly factor Nubp2 homolog (261 aa).

An ATP-binding site is contributed by 14–21 (GKGGVGKS). [4Fe-4S] cluster-binding residues include Cys188 and Cys191.

Belongs to the Mrp/NBP35 ATP-binding proteins family. NUBP2/CFD1 subfamily. In terms of assembly, heterotetramer of 2 Nubp1 and 2 Nubp2 chains. [4Fe-4S] cluster serves as cofactor.

The protein resides in the cytoplasm. Component of the cytosolic iron-sulfur (Fe/S) protein assembly (CIA) machinery. Required for maturation of extramitochondrial Fe-S proteins. The Nubp1-Nubp2 heterotetramer forms a Fe-S scaffold complex, mediating the de novo assembly of an Fe-S cluster and its transfer to target apoproteins. The protein is Cytosolic Fe-S cluster assembly factor Nubp2 homolog of Drosophila ananassae (Fruit fly).